A 44-amino-acid chain; its full sequence is MLRDLGRRVAIAAILSGIILGGMSISLANMPHSPAGGTVKLNHP.

A signal peptide spans 1–28 (MLRDLGRRVAIAAILSGIILGGMSISLA).

This is an uncharacterized protein from Bacillus subtilis (strain 168).